A 491-amino-acid polypeptide reads, in one-letter code: Probable glycine dehydrogenase (decarboxylating) subunit 2 (491 aa).

Lysine 273 carries the post-translational modification N6-(pyridoxal phosphate)lysine.

Belongs to the GcvP family. C-terminal subunit subfamily. The glycine cleavage system is composed of four proteins: P, T, L and H. In this organism, the P 'protein' is a heterodimer of two subunits. Pyridoxal 5'-phosphate serves as cofactor.

The catalysed reaction is N(6)-[(R)-lipoyl]-L-lysyl-[glycine-cleavage complex H protein] + glycine + H(+) = N(6)-[(R)-S(8)-aminomethyldihydrolipoyl]-L-lysyl-[glycine-cleavage complex H protein] + CO2. In terms of biological role, the glycine cleavage system catalyzes the degradation of glycine. The P protein binds the alpha-amino group of glycine through its pyridoxal phosphate cofactor; CO(2) is released and the remaining methylamine moiety is then transferred to the lipoamide cofactor of the H protein. The sequence is that of Probable glycine dehydrogenase (decarboxylating) subunit 2 from Bacillus cytotoxicus (strain DSM 22905 / CIP 110041 / 391-98 / NVH 391-98).